We begin with the raw amino-acid sequence, 485 residues long: 1-aminocyclopropane-1-carboxylate synthase 2 (485 aa).

Residues glutamate 55 and tyrosine 92 each coordinate substrate. N6-(pyridoxal phosphate)lysine is present on lysine 278. Serine 460 carries the post-translational modification Phosphoserine.

This sequence belongs to the class-I pyridoxal-phosphate-dependent aminotransferase family. In terms of assembly, homodimer and heterodimer. In vivo, the relevance of heterodimerization with other ACS enzymes is however unsure. Pyridoxal 5'-phosphate serves as cofactor. In terms of processing, phosphorylated on Ser 460; phosphorylation may regulate its turnover. Post-translationally, may be processed at its C-terminus.

The catalysed reaction is S-adenosyl-L-methionine = 1-aminocyclopropane-1-carboxylate + S-methyl-5'-thioadenosine + H(+). Its pathway is alkene biosynthesis; ethylene biosynthesis via S-adenosyl-L-methionine; ethylene from S-adenosyl-L-methionine: step 1/2. 1-aminocyclopropane-1-carboxylate synthase (ACS) enzymes catalyze the conversion of S-adenosyl-L-methionine (SAM) into 1-aminocyclopropane-1-carboxylate (ACC), a direct precursor of ethylene. This chain is 1-aminocyclopropane-1-carboxylate synthase 2 (ACS2), found in Solanum lycopersicum (Tomato).